We begin with the raw amino-acid sequence, 188 residues long: Large ribosomal subunit protein eL18 (188 aa).

It belongs to the eukaryotic ribosomal protein eL18 family.

The protein localises to the cytoplasm. This is Large ribosomal subunit protein eL18 (RpL18) from Drosophila melanogaster (Fruit fly).